Reading from the N-terminus, the 457-residue chain is Carboxypeptidase N catalytic chain (457 aa).

Residues 1 to 23 (MPDLPSAFLPLLLLSKFVTPVTF) form the signal peptide. The Peptidase M14 domain maps to 24 to 338 (RHHRYDDLVR…EALIQFLEQV (315 aa)). Cysteines 42 and 104 form a disulfide. Zn(2+) contacts are provided by His-86, Glu-89, and His-216. Cysteines 271 and 311 form a disulfide. Glu-308 acts as the Proton donor/acceptor in catalysis. 3 O-linked (GalNAc...) threonine glycosylation sites follow: Thr-400, Thr-402, and Thr-409. A disordered region spans residues 418–457 (STTQVHPVQKAPGRGQGSRAKQPRTSRKKDQAAKRHRGPA).

It belongs to the peptidase M14 family. Tetramer of two catalytic chains and two glycosylated inactive chains. Requires Zn(2+) as cofactor. In terms of tissue distribution, plasma. Expressed in liver.

The protein resides in the secreted. The protein localises to the extracellular space. The catalysed reaction is Release of a C-terminal basic amino acid, preferentially lysine.. Its function is as follows. Protects the body from potent vasoactive and inflammatory peptides containing C-terminal Arg or Lys (such as kinins or anaphylatoxins) which are released into the circulation. The chain is Carboxypeptidase N catalytic chain (Cpn1) from Rattus norvegicus (Rat).